Here is a 590-residue protein sequence, read N- to C-terminus: Aspartate--tRNA(Asp/Asn) ligase (590 aa).

An L-aspartate-binding site is contributed by Glu-175. The tract at residues 199–202 (QQYK) is aspartate. Residues Arg-221 and His-450 each coordinate L-aspartate. Position 221–223 (221–223 (RDE)) interacts with ATP. Glu-484 contributes to the ATP binding site. Residue Arg-491 coordinates L-aspartate. 536–539 (GVDR) is an ATP binding site.

It belongs to the class-II aminoacyl-tRNA synthetase family. Type 1 subfamily. As to quaternary structure, homodimer.

It localises to the cytoplasm. The catalysed reaction is tRNA(Asx) + L-aspartate + ATP = L-aspartyl-tRNA(Asx) + AMP + diphosphate. Its function is as follows. Aspartyl-tRNA synthetase with relaxed tRNA specificity since it is able to aspartylate not only its cognate tRNA(Asp) but also tRNA(Asn). Reaction proceeds in two steps: L-aspartate is first activated by ATP to form Asp-AMP and then transferred to the acceptor end of tRNA(Asp/Asn). The protein is Aspartate--tRNA(Asp/Asn) ligase of Bradyrhizobium diazoefficiens (strain JCM 10833 / BCRC 13528 / IAM 13628 / NBRC 14792 / USDA 110).